The following is a 283-amino-acid chain: Gap junction alpha-6 protein (283 aa).

Topologically, residues 1-23 are cytoplasmic; that stretch reads MSDWSALHQLLEKVQPYSTAGGK. A helical membrane pass occupies residues 24 to 41; the sequence is VWIKVLFIFRILLLGTAI. The Extracellular segment spans residues 42-76; sequence ESAWSDEQFEFHCNTQQPGCENVCYDHAFPISHVR. The helical transmembrane segment at 77 to 99 threads the bilayer; it reads LWVLQVIFVSVPILLYLAHVYYV. Topologically, residues 100–150 are cytoplasmic; that stretch reads VRQNKKLNKQEEELEAAHFNEASVERHLETIAGEQFKCGSEEQSKVKMRGR. Residues 151-173 traverse the membrane as a helical segment; sequence LLLTYMASIFFKSVFEMAFLLIQ. Over 174 to 208 the chain is Extracellular; sequence WYIYGFTLSALYICEQSPCPRRVDCFLSRPTEKTI. The helical transmembrane segment at 209–231 threads the bilayer; the sequence is FILFMFVVSVVSFVLDIIELFYV. At 232-283 the chain is on the cytoplasmic side; sequence LFKAIKNRMRKAEDEVYCDELPCPSHVSSSTVLTTIDSSEQAVPVELSSVCI.

The protein belongs to the connexin family. Alpha-type (group II) subfamily. As to quaternary structure, a connexon is composed of a hexamer of connexins.

The protein resides in the cell membrane. The protein localises to the cell junction. It localises to the gap junction. Functionally, one gap junction consists of a cluster of closely packed pairs of transmembrane channels, the connexons, through which materials of low MW diffuse from one cell to a neighboring cell. The protein is Gap junction alpha-6 protein (Gja6) of Mus musculus (Mouse).